Reading from the N-terminus, the 496-residue chain is Splicing factor U2AF 65 kDa subunit (496 aa).

Residues 1–26 show a composition bias toward basic and acidic residues; the sequence is MSDHQDGMKLEDIERQFLDVAQREGG. Residues 1 to 142 form a disordered region; sequence MSDHQDGMKL…PKKYRFWDVP (142 aa). The span at 59-77 shows a compositional bias: basic residues; that stretch reads KKRKRSRSRDRDTRRRSRS. Basic and acidic residues-rich tracts occupy residues 78 to 96 and 105 to 138; these read RDRG…DRSR and GGRD…KYRF. 3 consecutive RRM domains span residues 184 to 266, 291 to 368, and 404 to 488; these read RRLY…RPRD, NKIF…LACA, and NMVT…YYDV.

As to quaternary structure, forms a heterodimer with the U2AF small subunit.

Its subcellular location is the nucleus. Its function is as follows. Necessary for the splicing of pre-mRNA. Binds to the polypyrimidine tract of introns early during spliceosome assembly. This is Splicing factor U2AF 65 kDa subunit (uaf-1) from Caenorhabditis elegans.